A 578-amino-acid chain; its full sequence is 2-hydroxyacyl-CoA lyase 1 (578 aa).

Ser-4 is subject to Phosphoserine. Glu-60 serves as a coordination point for thiamine diphosphate. 3 positions are modified to N6-succinyllysine: Lys-351, Lys-358, and Lys-365. Residues 401–486 (TMDIGRTVLQ…LLVVNNNGIY (86 aa)) form a thiamine pyrophosphate binding region. Mg(2+) contacts are provided by Asp-455 and Asn-482. Positions 576-578 (SNM) match the Microbody targeting signal motif.

Belongs to the TPP enzyme family. As to quaternary structure, homotetramer. The cofactor is Mg(2+). Thiamine diphosphate is required as a cofactor. In terms of tissue distribution, widely expressed.

The protein localises to the peroxisome. The enzyme catalyses a 2-hydroxy-3-methyl fatty acyl-CoA = a 2-methyl-branched fatty aldehyde + formyl-CoA. It catalyses the reaction an (R)-2-hydroxy-long-chain-fatty acyl-CoA = a long-chain fatty aldehyde + formyl-CoA. The catalysed reaction is 2-hydroxy-3-methylhexadecanoyl-CoA = 2-methylpentadecanal + formyl-CoA. It carries out the reaction 2-hydroxyoctadecanoyl-CoA = heptadecanal + formyl-CoA. The enzyme catalyses 2-hydroxyphytanoyl-CoA = 2,6,10,14-tetramethylpentadecanal + formyl-CoA. It participates in lipid metabolism; fatty acid metabolism. Peroxisomal 2-OH acyl-CoA lyase involved in the cleavage (C1 removal) reaction in the fatty acid alpha-oxydation in a thiamine pyrophosphate (TPP)-dependent manner. Involved in the degradation of 3-methyl-branched fatty acids like phytanic acid and the shortening of 2-hydroxy long-chain fatty acids. Plays a significant role in the biosynthesis of heptadecanal in the liver. The chain is 2-hydroxyacyl-CoA lyase 1 from Homo sapiens (Human).